The primary structure comprises 368 residues: Ribosomal RNA large subunit methyltransferase M (368 aa).

S-adenosyl-L-methionine is bound by residues S189, C222–G225, D241, D261, and D278. The active-site Proton acceptor is the K307.

The protein belongs to the class I-like SAM-binding methyltransferase superfamily. RNA methyltransferase RlmE family. RlmM subfamily. In terms of assembly, monomer.

The protein resides in the cytoplasm. It carries out the reaction cytidine(2498) in 23S rRNA + S-adenosyl-L-methionine = 2'-O-methylcytidine(2498) in 23S rRNA + S-adenosyl-L-homocysteine + H(+). In terms of biological role, catalyzes the 2'-O-methylation at nucleotide C2498 in 23S rRNA. In Yersinia pestis bv. Antiqua (strain Angola), this protein is Ribosomal RNA large subunit methyltransferase M.